The primary structure comprises 499 residues: Putative hydrolase YuaR (499 aa).

A signal peptide spans 1–26 (MRVIMKPLRRTLVFFIFSVFLCGTVS). Positions 94-393 (GSVIIISGGP…DAFPAVNFER (300 aa)) constitute an AB hydrolase-1 domain. Serine 207 acts as the Nucleophile in catalysis. Aspartate 433 is a catalytic residue. Histidine 460 (proton donor) is an active-site residue.

It belongs to the peptidase S33 family.

In Escherichia coli (strain K12), this protein is Putative hydrolase YuaR (yuaR).